We begin with the raw amino-acid sequence, 193 residues long: MKVKVIPVLEDNYMYLVIEERTREAVAVDVAVPKRLLEIVGRERVSLTTVLTTHHHWDHARGNAELARLLPGLVVLGADERICALTRRLAHGEELRFGAIHVRCLLTPGHTLGHMSYFLWEEECPDPPAVFSGTGCPVPTCPTSPCPIPLSLTHPTPQGMHCPWPAAAHAWRAQFSRCTRAWWRPWAPCPLRQ.

The Zn(2+) site is built by H54, H56, D58, H59, and H110.

This sequence belongs to the metallo-beta-lactamase superfamily. Glyoxalase II family. Requires Zn(2+) as cofactor.

Hydrolase acting on ester bonds. The sequence is that of Hydroxyacylglutathione hydrolase-like protein (HAGHL) from Bos taurus (Bovine).